A 122-amino-acid polypeptide reads, in one-letter code: MGNKDLTVIKRKALRRGRMSEYVAAAFLMLKGYRILALRHRTRLGEIDIVARKGDLTIFVEVKARHGEAAAIDAVSVAAQKRIRAASDLWLARQADQARLSQRYDIIAVMPGRLPRHFPDAF.

It belongs to the UPF0102 family.

This chain is UPF0102 protein RHE_CH00320, found in Rhizobium etli (strain ATCC 51251 / DSM 11541 / JCM 21823 / NBRC 15573 / CFN 42).